The following is a 591-amino-acid chain: Beta-fructofuranosidase, insoluble isoenzyme CWINV4 (591 aa).

Residues Met1–Gln22 form the signal peptide. Substrate-binding positions include Trp61–Asp64, Gln80, Trp88, and Trp123–Ser124. Residue Asp64 is part of the active site. Asn145 and Asn182 each carry an N-linked (GlcNAc...) asparagine glycan. Substrate contacts are provided by residues Arg187–Asp188, Glu242, and Asp276. 3 N-linked (GlcNAc...) asparagine glycosylation sites follow: Asn336, Asn472, and Asn565. The cysteines at positions 436 and 484 are disulfide-linked.

The protein belongs to the glycosyl hydrolase 32 family. As to expression, expressed in flowers, and seeds, and, to a lower extent, in seedlings.

The protein resides in the secreted. It localises to the extracellular space. Its subcellular location is the apoplast. It is found in the cell wall. The catalysed reaction is Hydrolysis of terminal non-reducing beta-D-fructofuranoside residues in beta-D-fructofuranosides.. This is Beta-fructofuranosidase, insoluble isoenzyme CWINV4 (CWINV4) from Arabidopsis thaliana (Mouse-ear cress).